Here is a 358-residue protein sequence, read N- to C-terminus: S-adenosylmethionine decarboxylase proenzyme (358 aa).

Residues E11 and E14 contribute to the active site. S71 serves as the catalytic Schiff-base intermediate with substrate; via pyruvic acid. The residue at position 71 (S71) is a Pyruvic acid (Ser); by autocatalysis. C85 serves as the catalytic Proton donor; for catalytic activity. Residues S234 and H247 each act as proton acceptor; for processing activity in the active site.

This sequence belongs to the eukaryotic AdoMetDC family. Pyruvate is required as a cofactor. In terms of processing, is synthesized initially as an inactive proenzyme. Formation of the active enzyme involves a self-maturation process in which the active site pyruvoyl group is generated from an internal serine residue via an autocatalytic post-translational modification. Two non-identical subunits are generated from the proenzyme in this reaction, and the pyruvate is formed at the N-terminus of the alpha chain, which is derived from the carboxyl end of the proenzyme. The post-translation cleavage follows an unusual pathway, termed non-hydrolytic serinolysis, in which the side chain hydroxyl group of the serine supplies its oxygen atom to form the C-terminus of the beta chain, while the remainder of the serine residue undergoes an oxidative deamination to produce ammonia and the pyruvoyl group blocking the N-terminus of the alpha chain.

The catalysed reaction is S-adenosyl-L-methionine + H(+) = S-adenosyl 3-(methylsulfanyl)propylamine + CO2. Its pathway is amine and polyamine biosynthesis; S-adenosylmethioninamine biosynthesis; S-adenosylmethioninamine from S-adenosyl-L-methionine: step 1/1. In Solanum chilense (Tomato), this protein is S-adenosylmethionine decarboxylase proenzyme (SAMDC).